A 344-amino-acid polypeptide reads, in one-letter code: tRNA N6-adenosine threonylcarbamoyltransferase (344 aa).

The Fe cation site is built by histidine 114 and histidine 118. Substrate-binding positions include 136–140 (LVSGG), aspartate 170, glycine 183, aspartate 187, and asparagine 278. Aspartate 306 contributes to the Fe cation binding site. A disordered region spans residues 325–344 (PSPLDVPSDPGLPVMQGQVR).

The protein belongs to the KAE1 / TsaD family. Requires Fe(2+) as cofactor.

It is found in the cytoplasm. The enzyme catalyses L-threonylcarbamoyladenylate + adenosine(37) in tRNA = N(6)-L-threonylcarbamoyladenosine(37) in tRNA + AMP + H(+). In terms of biological role, required for the formation of a threonylcarbamoyl group on adenosine at position 37 (t(6)A37) in tRNAs that read codons beginning with adenine. Is involved in the transfer of the threonylcarbamoyl moiety of threonylcarbamoyl-AMP (TC-AMP) to the N6 group of A37, together with TsaE and TsaB. TsaD likely plays a direct catalytic role in this reaction. This is tRNA N6-adenosine threonylcarbamoyltransferase from Mycobacterium tuberculosis (strain ATCC 25177 / H37Ra).